The chain runs to 334 residues: Fructose-1,6-bisphosphatase class 1 (334 aa).

Mg(2+) contacts are provided by glutamate 92, aspartate 114, leucine 116, and aspartate 117. Residues 117 to 120 and asparagine 209 each bind substrate; that span reads DGSS. Glutamate 281 lines the Mg(2+) pocket.

The protein belongs to the FBPase class 1 family. Homotetramer. It depends on Mg(2+) as a cofactor.

It localises to the cytoplasm. The catalysed reaction is beta-D-fructose 1,6-bisphosphate + H2O = beta-D-fructose 6-phosphate + phosphate. It functions in the pathway carbohydrate biosynthesis; gluconeogenesis. This is Fructose-1,6-bisphosphatase class 1 from Nitrosomonas europaea (strain ATCC 19718 / CIP 103999 / KCTC 2705 / NBRC 14298).